Consider the following 435-residue polypeptide: Metacaspase-1A (435 aa).

2 disordered regions span residues 1-46 (MQNH…APPP) and 106-129 (YQNP…VAFG). Over residues 36-46 (SPQPGYGAPPP) the composition is skewed to pro residues. Active-site residues include His-231 and Cys-287.

This sequence belongs to the peptidase C14B family.

Functionally, involved in cell death (apoptosis). This Neosartorya fischeri (strain ATCC 1020 / DSM 3700 / CBS 544.65 / FGSC A1164 / JCM 1740 / NRRL 181 / WB 181) (Aspergillus fischerianus) protein is Metacaspase-1A (casA).